The primary structure comprises 921 residues: Isoleucine--tRNA ligase (921 aa).

Positions 59–69 (PYANGHLHIGH) match the 'HIGH' region motif. An L-isoleucyl-5'-AMP-binding site is contributed by E569. The short motif at 610–614 (KMSKS) is the 'KMSKS' region element. Position 613 (K613) interacts with ATP. The Zn(2+) site is built by C896, C899, C911, and C914.

The protein belongs to the class-I aminoacyl-tRNA synthetase family. IleS type 1 subfamily. As to quaternary structure, monomer. The cofactor is Zn(2+).

It is found in the cytoplasm. The enzyme catalyses tRNA(Ile) + L-isoleucine + ATP = L-isoleucyl-tRNA(Ile) + AMP + diphosphate. Functionally, catalyzes the attachment of isoleucine to tRNA(Ile). As IleRS can inadvertently accommodate and process structurally similar amino acids such as valine, to avoid such errors it has two additional distinct tRNA(Ile)-dependent editing activities. One activity is designated as 'pretransfer' editing and involves the hydrolysis of activated Val-AMP. The other activity is designated 'posttransfer' editing and involves deacylation of mischarged Val-tRNA(Ile). This Campylobacter hominis (strain ATCC BAA-381 / DSM 21671 / CCUG 45161 / LMG 19568 / NCTC 13146 / CH001A) protein is Isoleucine--tRNA ligase.